A 512-amino-acid polypeptide reads, in one-letter code: Krueppel-like factor 11 (512 aa).

The interval Pro109 to Thr128 is disordered. Polar residues predominate over residues Ser118 to Thr128. Ser124 carries the phosphoserine modification. 3 C2H2-type zinc fingers span residues Tyr394–His418, Phe424–His448, and Phe454–His476.

The protein belongs to the Sp1 C2H2-type zinc-finger protein family. As to quaternary structure, interacts with SIN3A. Ubiquitous. Higher expression in erythroid cells.

The protein localises to the nucleus. Its function is as follows. Transcription factor. Activates the epsilon- and gamma-globin gene promoters and, to a much lower degree, the beta-globin gene and represses promoters containing SP1-like binding inhibiting cell growth. Represses transcription of SMAD7 which enhances TGF-beta signaling. Induces apoptosis. The polypeptide is Krueppel-like factor 11 (KLF11) (Homo sapiens (Human)).